The primary structure comprises 88 residues: MSIMDHSPTTGVVTVIVILIAIAALGALILGCWCYLRLQRISQSEDEESIVGDGETKEPFLLVQYSAKGPCVERKAKLMTANSPEVHG.

Residues 1 to 10 lie on the Mitochondrial intermembrane side of the membrane; sequence MSIMDHSPTT. The helical transmembrane segment at 11–31 threads the bilayer; the sequence is GVVTVIVILIAIAALGALILG. At 32 to 88 the chain is on the cytoplasmic side; the sequence is CWCYLRLQRISQSEDEESIVGDGETKEPFLLVQYSAKGPCVERKAKLMTANSPEVHG. 2 positions are modified to phosphoserine: S49 and S83.

Belongs to the stannin family. In terms of assembly, monomer.

It is found in the mitochondrion outer membrane. Its function is as follows. Plays a role in the toxic effects of organotins. Plays a role in endosomal maturation. This chain is Stannin (Snn), found in Mus musculus (Mouse).